The primary structure comprises 480 residues: UDP-N-acetylmuramoylalanine--D-glutamate ligase (480 aa).

Residue 110 to 116 (GTNGKST) coordinates ATP.

This sequence belongs to the MurCDEF family.

Its subcellular location is the cytoplasm. The enzyme catalyses UDP-N-acetyl-alpha-D-muramoyl-L-alanine + D-glutamate + ATP = UDP-N-acetyl-alpha-D-muramoyl-L-alanyl-D-glutamate + ADP + phosphate + H(+). It functions in the pathway cell wall biogenesis; peptidoglycan biosynthesis. Cell wall formation. Catalyzes the addition of glutamate to the nucleotide precursor UDP-N-acetylmuramoyl-L-alanine (UMA). The polypeptide is UDP-N-acetylmuramoylalanine--D-glutamate ligase (Synechococcus sp. (strain JA-2-3B'a(2-13)) (Cyanobacteria bacterium Yellowstone B-Prime)).